The chain runs to 685 residues: Heat shock protein homolog SSE1 (685 aa).

The interval 651–685 is disordered; the sequence is QALRSNQEASKMADLSAKLAAQRKAEAEAKENAKE. Basic and acidic residues predominate over residues 673 to 685; it reads RKAEAEAKENAKE.

This sequence belongs to the heat shock protein 70 family.

The protein localises to the cytoplasm. In Naumovozyma castellii (Yeast), this protein is Heat shock protein homolog SSE1 (SSE1).